A 195-amino-acid polypeptide reads, in one-letter code: Fe/S biogenesis protein NfuA (195 aa).

Residues Cys152 and Cys155 each coordinate [4Fe-4S] cluster.

The protein belongs to the NfuA family. In terms of assembly, homodimer. It depends on [4Fe-4S] cluster as a cofactor.

In terms of biological role, involved in iron-sulfur cluster biogenesis. Binds a 4Fe-4S cluster, can transfer this cluster to apoproteins, and thereby intervenes in the maturation of Fe/S proteins. Could also act as a scaffold/chaperone for damaged Fe/S proteins. The protein is Fe/S biogenesis protein NfuA of Vibrio cholerae serotype O1 (strain ATCC 39541 / Classical Ogawa 395 / O395).